The following is a 123-amino-acid chain: Small ribosomal subunit protein uS13 (123 aa).

Residues 94–123 (AGLPVRGQRTKTNARTRKGPKKTVGVQRKK) form a disordered region. Over residues 101-123 (QRTKTNARTRKGPKKTVGVQRKK) the composition is skewed to basic residues.

The protein belongs to the universal ribosomal protein uS13 family. As to quaternary structure, part of the 30S ribosomal subunit. Forms a loose heterodimer with protein S19. Forms two bridges to the 50S subunit in the 70S ribosome.

In terms of biological role, located at the top of the head of the 30S subunit, it contacts several helices of the 16S rRNA. In the 70S ribosome it contacts the 23S rRNA (bridge B1a) and protein L5 of the 50S subunit (bridge B1b), connecting the 2 subunits; these bridges are implicated in subunit movement. Contacts the tRNAs in the A and P-sites. The protein is Small ribosomal subunit protein uS13 of Acetivibrio thermocellus (strain ATCC 27405 / DSM 1237 / JCM 9322 / NBRC 103400 / NCIMB 10682 / NRRL B-4536 / VPI 7372) (Clostridium thermocellum).